The primary structure comprises 152 residues: Large ribosomal subunit protein eL14 (152 aa).

This sequence belongs to the eukaryotic ribosomal protein eL14 family.

The sequence is that of Large ribosomal subunit protein eL14 (RPL14) from Lumbricus rubellus (Humus earthworm).